A 138-amino-acid chain; its full sequence is Basic phospholipase A2 homolog Tpu-K49a (138 aa).

The first 16 residues, 1–16 (MRTLWIMAVLLVGVEG), serve as a signal peptide directing secretion. 6 disulfide bridges follow: cysteine 42–cysteine 131, cysteine 44–cysteine 60, cysteine 59–cysteine 111, cysteine 65–cysteine 138, cysteine 66–cysteine 104, and cysteine 91–cysteine 102. The segment at 121-133 (KKERINTKIFCKK) is important for membrane-damaging activities in eukaryotes and bacteria; heparin-binding.

In terms of assembly, monomer. In terms of tissue distribution, expressed by the venom gland.

It is found in the secreted. Functionally, snake venom phospholipase A2 homolog that lacks catalytic activity. Induces local edema a few hours after injection in the hind foot. Is myotoxic. A model of myotoxic mechanism has been proposed: an apo Lys49-PLA2 is activated by the entrance of a hydrophobic molecule (e.g. fatty acid) at the hydrophobic channel of the protein leading to a reorientation of a monomer. This reorientation causes a transition between 'inactive' to 'active' states, causing alignment of C-terminal and membrane-docking sites (MDoS) side-by-side and putting the membrane-disruption sites (MDiS) in the same plane, exposed to solvent and in a symmetric position for both monomers. The MDoS region stabilizes the toxin on membrane by the interaction of charged residues with phospholipid head groups. Subsequently, the MDiS region destabilizes the membrane with penetration of hydrophobic residues. This insertion causes a disorganization of the membrane, allowing an uncontrolled influx of ions (i.e. calcium and sodium), and eventually triggering irreversible intracellular alterations and cell death. The chain is Basic phospholipase A2 homolog Tpu-K49a from Craspedocephalus puniceus (Flat-nosed pitviper).